The chain runs to 124 residues: Fluoride-specific ion channel FluC (124 aa).

The next 4 helical transmembrane spans lie at 5-25 (LLVSLGAVAGAILRWQLAVWF), 32-52 (FAFGTLFVNLCGCFLIGITLG), 61-81 (LLFVTGFLGSFTTFSSFSAEV), and 94-114 (LAVISAHLIGGLVLTILGILV). Positions 69 and 72 each coordinate Na(+).

Belongs to the fluoride channel Fluc/FEX (TC 1.A.43) family.

Its subcellular location is the cell inner membrane. The catalysed reaction is fluoride(in) = fluoride(out). Na(+) is not transported, but it plays an essential structural role and its presence is essential for fluoride channel function. Fluoride-specific ion channel. Important for reducing fluoride concentration in the cell, thus reducing its toxicity. This chain is Fluoride-specific ion channel FluC, found in Haemophilus ducreyi (strain 35000HP / ATCC 700724).